The chain runs to 1194 residues: IQ motif and SEC7 domain-containing protein 3 (1194 aa).

The stretch at 20–56 forms a coiled coil; the sequence is AIVQNQQSLIHTQRQRIDELERRLDELSAENRSLWEH. 2 disordered regions span residues 62 to 149 and 229 to 272; these read AQPP…EKER and GRPS…QQPA. A compositionally biased stretch (pro residues) spans 63–78; the sequence is QPPPGLVPPPSAPLPA. Low complexity predominate over residues 79 to 92; it reads PAATAPAATAAQEP. The segment covering 122–133 has biased composition (polar residues); that stretch reads PSSRVQTPQSPH. Serine 255 is subject to Phosphoserine. Residues 311 to 340 enclose the IQ domain; the sequence is SRRAACTIQTAFRQYQLSKNFEKIRNSLLE. Disordered regions lie at residues 439-471 and 515-610; these read SAGQ…QGHS and PAAV…KSAK. 2 stretches are compositionally biased toward low complexity: residues 561–572 and 600–610; these read VAEAVVEEAVAT and SSSSASTKSAK. Residues 646–839 enclose the SEC7 domain; that stretch reads TLSTDTLRKR…VGIYERIQQK (194 aa). Residues 852-985 form the PH domain; sequence TKVEKSIVGM…LKESIAEVTE (134 aa). 2 disordered regions span residues 1002–1099 and 1137–1175; these read KTLS…PTPP and SSDS…HQFC. Residues 1024–1035 show a composition bias toward basic and acidic residues; the sequence is AKREAMAGEKAT. The segment covering 1036-1052 has biased composition (polar residues); that stretch reads ESSGEVSIHNRLQTFQH. Pro residues-rich tracts occupy residues 1064 to 1099 and 1159 to 1169; these read APSP…PTPP and PPLPPPPPPYN.

This sequence belongs to the BRAG family. As to quaternary structure, interacts with DLG1 and DLG4. Interacts with GPHN. Expressed in brain. Localized to dendrites, as well as somas of neuronal cells.

Its subcellular location is the cytoplasm. The protein resides in the postsynaptic density. In terms of biological role, acts as a guanine nucleotide exchange factor (GEF) for ARF1. The protein is IQ motif and SEC7 domain-containing protein 3 (Iqsec3) of Rattus norvegicus (Rat).